We begin with the raw amino-acid sequence, 225 residues long: Uridine kinase (225 aa).

Position 12 to 19 (12 to 19 (GGTGAGKT)) interacts with ATP.

It belongs to the uridine kinase family.

The protein localises to the cytoplasm. The catalysed reaction is uridine + ATP = UMP + ADP + H(+). The enzyme catalyses cytidine + ATP = CMP + ADP + H(+). Its pathway is pyrimidine metabolism; CTP biosynthesis via salvage pathway; CTP from cytidine: step 1/3. It participates in pyrimidine metabolism; UMP biosynthesis via salvage pathway; UMP from uridine: step 1/1. This Halobacterium salinarum (strain ATCC 700922 / JCM 11081 / NRC-1) (Halobacterium halobium) protein is Uridine kinase.